Here is a 410-residue protein sequence, read N- to C-terminus: Class E basic helix-loop-helix protein 41 (410 aa).

A Glycyl lysine isopeptide (Lys-Gly) (interchain with G-Cter in SUMO2) cross-link involves residue Lys-31. The region spanning 44–99 (TYKLPHRLIEKKRRDRINECIAQLKDLLPEHLKLTTLGHLEKAVVLELTLKHLKAL) is the bHLH domain. Residue Lys-121 forms a Glycyl lysine isopeptide (Lys-Gly) (interchain with G-Cter in SUMO2) linkage. The Orange domain maps to 131-166 (FHSGFQTCAKEVLQYLARFESWTPREPRCAQLVSHL). Disordered stretches follow at residues 209 to 251 (IQRT…SAAP) and 371 to 410 (EVAP…KDAP). Residue Lys-240 forms a Glycyl lysine isopeptide (Lys-Gly) (interchain with G-Cter in SUMO2) linkage.

Homodimer. Heterodimer with BHLHE40/DEC1. Interacts with CIART. Interacts with BMAL1 and RXRA. Interacts with NR0B2 and HNF1A. Highly expressed in the caudate putamen, pineal gland, granular cell layer of the cerebellum, olfactory bulb, piriform cortex, hippocampus and hypothalamic nuclei. Moderately expressed in skeletal muscle, heart. Weakly expressed in lung.

Its subcellular location is the nucleus. Its function is as follows. Transcriptional repressor involved in the regulation of the circadian rhythm by negatively regulating the activity of the clock genes and clock-controlled genes. Acts as the negative limb of a novel autoregulatory feedback loop (DEC loop) which differs from the one formed by the PER and CRY transcriptional repressors (PER/CRY loop). Both these loops are interlocked as it represses the expression of PER1 and in turn is repressed by PER1/2 and CRY1/2. Represses the activity of the circadian transcriptional activator: CLOCK-BMAL1 heterodimer by competing for the binding to E-box elements (5'-CACGTG-3') found within the promoters of its target genes. Negatively regulates its own expression and the expression of DBP and BHLHE41/DEC2. Acts as a corepressor of RXR and the RXR-LXR heterodimers and represses the ligand-induced RXRA/B/G, NR1H3/LXRA, NR1H4 and VDR transactivation activity. Inhibits HNF1A-mediated transactivation of CYP1A2, CYP2E1 and CYP3A11. The polypeptide is Class E basic helix-loop-helix protein 41 (Bhlhb3) (Rattus norvegicus (Rat)).